Consider the following 208-residue polypeptide: Pyridoxine/pyridoxamine 5'-phosphate oxidase (208 aa).

Residues 53–58 (RTVLLK), 68–69 (YS), lysine 75, and glutamine 100 each bind FMN. Lysine 58 is a substrate binding site. 3 residues coordinate substrate: tyrosine 118, arginine 122, and serine 126. Residues 135-136 (QS) and tryptophan 180 contribute to the FMN site. Position 186–188 (186–188 (RLH)) interacts with substrate. Position 190 (arginine 190) interacts with FMN.

It belongs to the pyridoxamine 5'-phosphate oxidase family. In terms of assembly, homodimer. FMN serves as cofactor.

It carries out the reaction pyridoxamine 5'-phosphate + O2 + H2O = pyridoxal 5'-phosphate + H2O2 + NH4(+). It catalyses the reaction pyridoxine 5'-phosphate + O2 = pyridoxal 5'-phosphate + H2O2. The protein operates within cofactor metabolism; pyridoxal 5'-phosphate salvage; pyridoxal 5'-phosphate from pyridoxamine 5'-phosphate: step 1/1. It participates in cofactor metabolism; pyridoxal 5'-phosphate salvage; pyridoxal 5'-phosphate from pyridoxine 5'-phosphate: step 1/1. In terms of biological role, catalyzes the oxidation of either pyridoxine 5'-phosphate (PNP) or pyridoxamine 5'-phosphate (PMP) into pyridoxal 5'-phosphate (PLP). This Xylella fastidiosa (strain 9a5c) protein is Pyridoxine/pyridoxamine 5'-phosphate oxidase.